A 225-amino-acid chain; its full sequence is Cytochrome c oxidase subunit 2 (225 aa).

Residues M1–H26 lie on the Mitochondrial intermembrane side of the membrane. The helical transmembrane segment at S27–N48 threads the bilayer. Residues N49–E62 are Mitochondrial matrix-facing. A helical transmembrane segment spans residues I63–H82. Over L83–S225 the chain is Mitochondrial intermembrane. Residues H160, C195, E197, C199, H203, and M206 each coordinate Cu cation. E197 is a Mg(2+) binding site.

It belongs to the cytochrome c oxidase subunit 2 family. Component of the cytochrome c oxidase (complex IV, CIV), a multisubunit enzyme composed of a catalytic core of 3 subunits and several supernumerary subunits. The complex exists as a monomer or a dimer and forms supercomplexes (SCs) in the inner mitochondrial membrane with ubiquinol-cytochrome c oxidoreductase (cytochrome b-c1 complex, complex III, CIII). It depends on Cu cation as a cofactor.

It is found in the mitochondrion inner membrane. It catalyses the reaction 4 Fe(II)-[cytochrome c] + O2 + 8 H(+)(in) = 4 Fe(III)-[cytochrome c] + 2 H2O + 4 H(+)(out). Functionally, component of the cytochrome c oxidase, the last enzyme in the mitochondrial electron transport chain which drives oxidative phosphorylation. The respiratory chain contains 3 multisubunit complexes succinate dehydrogenase (complex II, CII), ubiquinol-cytochrome c oxidoreductase (cytochrome b-c1 complex, complex III, CIII) and cytochrome c oxidase (complex IV, CIV), that cooperate to transfer electrons derived from NADH and succinate to molecular oxygen, creating an electrochemical gradient over the inner membrane that drives transmembrane transport and the ATP synthase. Cytochrome c oxidase is the component of the respiratory chain that catalyzes the reduction of oxygen to water. Electrons originating from reduced cytochrome c in the intermembrane space (IMS) are transferred via the dinuclear copper A center (CU(A)) of subunit 2 and heme A of subunit 1 to the active site in subunit 1, a binuclear center (BNC) formed by heme A3 and copper B (CU(B)). The BNC reduces molecular oxygen to 2 water molecules using 4 electrons from cytochrome c in the IMS and 4 protons from the mitochondrial matrix. This chain is Cytochrome c oxidase subunit 2 (COII), found in Rhipicephalus sanguineus (Brown dog tick).